A 2625-amino-acid polypeptide reads, in one-letter code: Highly reducing polyketide synthase frbB (2625 aa).

A compositionally biased stretch (basic and acidic residues) spans 1-10 (MRNIDEHMSE). The segment at 1–25 (MRNIDEHMSERATLQSSGGYGERDS) is disordered. The 423-residue stretch at 27-449 (VEPIAIIGMS…GTNAHVILDR (423 aa)) folds into the Ketosynthase family 3 (KS3) domain. Catalysis depends on for beta-ketoacyl synthase activity residues cysteine 200, histidine 334, and histidine 375. Positions 563-883 (YVFSGQGAQY…DAASTLLTTI (321 aa)) are malonyl-CoA:ACP transacylase (MAT) domain. The interval 942–1080 (HELLGNMSTD…GRIRAVLDDS (139 aa)) is N-terminal hotdog fold. The interval 942–1252 (HELLGNMSTD…GMILAKLPGG (311 aa)) is dehydratase (DH) domain. A PKS/mFAS DH domain is found at 942–1255 (HELLGNMSTD…LAKLPGGTSR (314 aa)). Residue histidine 974 is the Proton acceptor; for dehydratase activity of the active site. The C-terminal hotdog fold stretch occupies residues 1102–1255 (VRFVSPSAFY…LAKLPGGTSR (154 aa)). The active-site Proton donor; for dehydratase activity is the aspartate 1167. Residues 1490-1673 (YHQIKAYIAE…GFVDTEPVFR (184 aa)) are methyltransferase (CMet) domain. Residues 1907–2220 (GLLETFHWKP…SGKHIGKVIL (314 aa)) form an enoyl reductase (ER) domain region. A ketoreductase (KR) domain region spans residues 2261–2439 (AVYIVVGGLG…GYSINIGPVS (179 aa)). In terms of domain architecture, Carrier spans 2542 to 2619 (GAEAAVLTAI…HLARLAAEES (78 aa)). An O-(pantetheine 4'-phosphoryl)serine modification is found at serine 2579.

The protein operates within antifungal biosynthesis. Highly reducing polyketide synthase; part of the gene cluster that mediates the biosynthesis of the antifungal antibiotic FR901469, an inhibitor of beta-1,3-glucansynthase, exerting antifungal activity against the pathogenes Candida albicans and Aspergillus fumigatus. FR901469 is a cyclic depsipeptide containing 12 amino acid residues and a fatty acid chain. The NRPS frbI contains 12 modules responsible for the formation of the depsipeptide backbone which is denoted as Acyl-Thr-Ala-Tyr-Val-4OHPro-Thr-Thr-3OHPro-threo3OHGln-Gly-Thr-Orn-OH (C71H116N14O23). The PKS frbB is probably involved in the production of the hydrocarbon chain, and the acyl-CoA ligase frbC might be involved in the transport of the chain to the peptide ptoduct of frbI. Because FR901469 contains 3 hydroxylated amino acid residues, the 3 oxygenases frbA, frbH, and frbJ might be participating in amino acid hydroxylation. As no thioesterase domains were detected in frbI or frbB, the thioesterases frbD and frbE may instead release and cyclize the products of the NRPS and PKS, respectively. The polypeptide is Highly reducing polyketide synthase frbB (Dothideomycetidae sp. (strain 11243) (Fungal sp. (strain No.11243))).